We begin with the raw amino-acid sequence, 351 residues long: Bifunctional UDP-glucose 4-epimerase and UDP-xylose 4-epimerase 3 (351 aa).

8 to 39 (NILVTGGAGFIGTHTVVQLLNQGFKVTIIDNL) provides a ligand contact to NAD(+). Residue serine 134 coordinates substrate. The Proton acceptor role is filled by tyrosine 158.

It belongs to the NAD(P)-dependent epimerase/dehydratase family. As to quaternary structure, homodimer. Heterodimer. It depends on NAD(+) as a cofactor. As to expression, ubiquitous.

It carries out the reaction UDP-alpha-D-glucose = UDP-alpha-D-galactose. The enzyme catalyses UDP-beta-L-arabinopyranose = UDP-alpha-D-xylose. It functions in the pathway carbohydrate metabolism; galactose metabolism. Its pathway is nucleotide-sugar biosynthesis; UDP-L-arabinose biosynthesis; UDP-L-arabinose from UDP-alpha-D-xylose: step 1/1. It participates in cell wall biogenesis; cell wall polysaccharide biosynthesis. Strongly inhibited by UDP. Catalyzes the interconversion between UDP-glucose and UDP-galactose and the interconversion between UDP-arabinose and UDP-xylose. Cooperates with UGE2 in pollen development. May preferentially act in the UDP-galactose to UDP-glucose direction, therefore displaying a role in carbohydrate catabolism. This Arabidopsis thaliana (Mouse-ear cress) protein is Bifunctional UDP-glucose 4-epimerase and UDP-xylose 4-epimerase 3 (UGE3).